Consider the following 90-residue polypeptide: Antitoxin epsilon (90 aa).

The protein belongs to the epsilon antitoxin family. In terms of assembly, in the presence of the zeta toxin, forms an inactive PezA(2)PezT(2) heterotetramer. The heterotetramer is still able to bind the zeta toxin substrate UNAG.

Functionally, antitoxin component of a type II toxin-antitoxin (TA) system. Neutralizes the toxic effect of cognate zeta toxin. Part of a postsegregational killing (PSK) system involved in the killing of plasmid-free cells. Continuous synthesis of the epsilon antitoxin is required to counteract the zeta toxin. In Streptococcus pyogenes, this protein is Antitoxin epsilon.